A 427-amino-acid chain; its full sequence is UPF0597 protein FN1147 (427 aa).

It belongs to the UPF0597 family.

This Fusobacterium nucleatum subsp. nucleatum (strain ATCC 25586 / DSM 15643 / BCRC 10681 / CIP 101130 / JCM 8532 / KCTC 2640 / LMG 13131 / VPI 4355) protein is UPF0597 protein FN1147.